The chain runs to 106 residues: 3-phenylpropionate/cinnamic acid dioxygenase ferredoxin subunit (106 aa).

The Rieske domain occupies 4–99; that stretch reads IYACPVADVP…VHVEGGDIFI (96 aa). [2Fe-2S] cluster-binding residues include Cys-42, His-44, Cys-62, and His-65.

It belongs to the bacterial ring-hydroxylating dioxygenase ferredoxin component family. This dioxygenase system consists of four proteins: the two subunits of the hydroxylase component (HcaE and HcaF), a ferredoxin (HcaC) and a ferredoxin reductase (HcaD). [2Fe-2S] cluster serves as cofactor.

It participates in aromatic compound metabolism; 3-phenylpropanoate degradation. Part of the multicomponent 3-phenylpropionate dioxygenase, that converts 3-phenylpropionic acid (PP) and cinnamic acid (CI) into 3-phenylpropionate-dihydrodiol (PP-dihydrodiol) and cinnamic acid-dihydrodiol (CI-dihydrodiol), respectively. This protein seems to be a 2Fe-2S ferredoxin. The protein is 3-phenylpropionate/cinnamic acid dioxygenase ferredoxin subunit of Shigella flexneri serotype 5b (strain 8401).